The following is a 256-amino-acid chain: UPF0246 protein Sde_3824 (256 aa).

The protein belongs to the UPF0246 family.

In Saccharophagus degradans (strain 2-40 / ATCC 43961 / DSM 17024), this protein is UPF0246 protein Sde_3824.